Reading from the N-terminus, the 365-residue chain is Aminomethyltransferase (365 aa).

The protein belongs to the GcvT family. In terms of assembly, the glycine cleavage system is composed of four proteins: P, T, L and H.

The enzyme catalyses N(6)-[(R)-S(8)-aminomethyldihydrolipoyl]-L-lysyl-[protein] + (6S)-5,6,7,8-tetrahydrofolate = N(6)-[(R)-dihydrolipoyl]-L-lysyl-[protein] + (6R)-5,10-methylene-5,6,7,8-tetrahydrofolate + NH4(+). The glycine cleavage system catalyzes the degradation of glycine. The protein is Aminomethyltransferase of Aeromonas hydrophila subsp. hydrophila (strain ATCC 7966 / DSM 30187 / BCRC 13018 / CCUG 14551 / JCM 1027 / KCTC 2358 / NCIMB 9240 / NCTC 8049).